Here is a 350-residue protein sequence, read N- to C-terminus: Histidinol-phosphate aminotransferase (350 aa).

Lys210 is modified (N6-(pyridoxal phosphate)lysine).

It belongs to the class-II pyridoxal-phosphate-dependent aminotransferase family. Histidinol-phosphate aminotransferase subfamily. In terms of assembly, homodimer. Requires pyridoxal 5'-phosphate as cofactor.

It catalyses the reaction L-histidinol phosphate + 2-oxoglutarate = 3-(imidazol-4-yl)-2-oxopropyl phosphate + L-glutamate. It functions in the pathway amino-acid biosynthesis; L-histidine biosynthesis; L-histidine from 5-phospho-alpha-D-ribose 1-diphosphate: step 7/9. This Pseudomonas syringae pv. syringae (strain B728a) protein is Histidinol-phosphate aminotransferase.